Consider the following 549-residue polypeptide: Glucose-6-phosphate isomerase (549 aa).

Glu355 (proton donor) is an active-site residue. Catalysis depends on residues His386 and Lys514.

The protein belongs to the GPI family.

The protein resides in the cytoplasm. It carries out the reaction alpha-D-glucose 6-phosphate = beta-D-fructose 6-phosphate. Its pathway is carbohydrate biosynthesis; gluconeogenesis. It functions in the pathway carbohydrate degradation; glycolysis; D-glyceraldehyde 3-phosphate and glycerone phosphate from D-glucose: step 2/4. Its function is as follows. Catalyzes the reversible isomerization of glucose-6-phosphate to fructose-6-phosphate. This chain is Glucose-6-phosphate isomerase, found in Enterobacter sp. (strain 638).